Here is a 223-residue protein sequence, read N- to C-terminus: Small ribosomal subunit protein uS3 (223 aa).

The region spanning 40-108 (IRELVHRELP…KVHLNIQEIR (69 aa)) is the KH type-2 domain.

It belongs to the universal ribosomal protein uS3 family. In terms of assembly, part of the 30S ribosomal subunit. Forms a tight complex with proteins S10 and S14.

In terms of biological role, binds the lower part of the 30S subunit head. Binds mRNA in the 70S ribosome, positioning it for translation. In Thermomicrobium roseum (strain ATCC 27502 / DSM 5159 / P-2), this protein is Small ribosomal subunit protein uS3.